A 256-amino-acid polypeptide reads, in one-letter code: Probable galactose dehydrogenase GalD (256 aa).

Residues Gly-20–Ser-23, Asp-71–Leu-72, and Asn-98 contribute to the NAD(+) site. Ser-150 is a binding site for substrate. Tyr-163 acts as the Proton acceptor in catalysis. Residues Tyr-163–Lys-167 and Ile-196 each bind NAD(+).

The protein belongs to the short-chain dehydrogenases/reductases (SDR) family.

Its function is as follows. Involved in the degradation of galactose via the DeLey-Doudoroff pathway. Catalyzes the oxidation of galactose in the presence of NAD(+). Uses NAD(+) as a hydrogen acceptor more efficiently than NADP(+). In Rhizobium meliloti (strain 1021) (Ensifer meliloti), this protein is Probable galactose dehydrogenase GalD (galD).